The primary structure comprises 118 residues: uncharacterized protein (118 aa).

A disordered region spans residues 49–80 (SKEEHTTSAANLHPRKKKRMPPRRAEKNKAPN). Positions 61–70 (HPRKKKRMPP) are enriched in basic residues.

This is an uncharacterized protein from Saccharomyces cerevisiae (strain ATCC 204508 / S288c) (Baker's yeast).